The primary structure comprises 1938 residues: Histone-lysine N-methyltransferase SETD1B (1938 aa).

Basic and acidic residues predominate over residues 1–20 (MSFKEAKPGERGKNPEDHGR). Residues 1-44 (MSFKEAKPGERGKNPEDHGRKQAASWMNGMEAANQPSTSAEKKS) form a disordered region. Residues 111 to 199 (DEFYVGPVPP…NIIHAELDTK (89 aa)) form the RRM domain. 11 disordered regions span residues 226–357 (LDAS…ENTF), 369–484 (FPRT…TRIA), 496–630 (LISS…EVTP), 652–688 (GFPPLPPPPPPQSGFPMPPPLPPPPPPTHPSVTVPPP), 916–1125 (KEPP…SSPV), 1147–1174 (HQTAQDTSHLRKKDLDVPLVESKEHKQD), 1187–1206 (MQQNVFKEHEKAPSPMNEEE), 1327–1373 (KTLS…GNSL), 1413–1468 (FPES…VPHM), 1496–1528 (ECEFTKGQLPSTDESAPSPPFPPTDKRKGPKKP), and 1744–1772 (DEPPIDTQGKSIPAQPQASTRAGSERRSE). Polar residues-rich tracts occupy residues 254–290 (VTPNSSTPFSHDTAYSSSRQGTPNSYSQFTPQSQGTP), 298–312 (PFSQDSSYSSRQTTP), 375–407 (LSHSSGNNKSAFSPYQGSTVFPQTDDNQYPQTS), and 446–457 (DSTTEQKASFAQ). Over residues 512–531 (SPISSSSSQLSPIPPYSSSS) the composition is skewed to low complexity. 2 stretches are compositionally biased toward polar residues: residues 532–546 (HYQDVTPSSRPSSTG) and 569–585 (SLCQNSRSASPIDQINQ). The segment covering 588–599 (RKMETLDNKELV) has biased composition (basic and acidic residues). The segment covering 619–628 (EDMEISDDEV) has biased composition (acidic residues). 2 stretches are compositionally biased toward acidic residues: residues 976 to 990 (SEGEEEVESEGDDGE) and 1054 to 1114 (DSSD…EDFF). Residues 1159–1174 (KDLDVPLVESKEHKQD) show a composition bias toward basic and acidic residues. The span at 1329-1343 (LSEEELPRTPGRDIL) shows a compositional bias: basic and acidic residues. Polar residues-rich tracts occupy residues 1349-1358 (LGKSQSTETI) and 1441-1453 (EPTSASLTMNSVP). Residues 1454–1464 (SPIPFASPPRG) are compositionally biased toward pro residues. The span at 1751–1765 (QGKSIPAQPQASTRA) shows a compositional bias: polar residues. Positions 1770–1775 (RSEQRR) match the RxxxRR motif motif. Residues 1799-1916 (KKIRFCKSHI…VNEEITYDYK (118 aa)) form the SET domain. Residue Tyr1915 participates in S-adenosyl-L-methionine binding. In terms of domain architecture, Post-SET spans 1922 to 1938 (VKIPCLCGAENCRGTLN).

This sequence belongs to the class V-like SAM-binding methyltransferase superfamily. Component of the SET1B/COMPASS complex.

It localises to the nucleus speckle. Its subcellular location is the chromosome. The catalysed reaction is L-lysyl(4)-[histone H3] + 3 S-adenosyl-L-methionine = N(6),N(6),N(6)-trimethyl-L-lysyl(4)-[histone H3] + 3 S-adenosyl-L-homocysteine + 3 H(+). Histone methyltransferase that specifically methylates 'Lys-4' of histone H3, when part of the SET1 histone methyltransferase (HMT) complex, but not if the neighboring 'Lys-9' residue is already methylated. H3 'Lys-4' methylation represents a specific tag for epigenetic transcriptional activation. This is Histone-lysine N-methyltransferase SETD1B (setd1b) from Xenopus laevis (African clawed frog).